A 221-amino-acid chain; its full sequence is Small ribosomal subunit protein uS3 (221 aa).

Residues 39–108 (IRKFVKKELF…NVLINIVEVK (70 aa)) form the KH type-2 domain.

This sequence belongs to the universal ribosomal protein uS3 family. Part of the 30S ribosomal subunit. Forms a tight complex with proteins S10 and S14.

Its function is as follows. Binds the lower part of the 30S subunit head. Binds mRNA in the 70S ribosome, positioning it for translation. The polypeptide is Small ribosomal subunit protein uS3 (Clostridium beijerinckii (strain ATCC 51743 / NCIMB 8052) (Clostridium acetobutylicum)).